A 423-amino-acid chain; its full sequence is Serine--tRNA ligase (423 aa).

Residue 230–232 participates in L-serine binding; that stretch reads TAE. Residue 261 to 263 participates in ATP binding; sequence RQE. Residue Glu-284 coordinates L-serine. 348–351 provides a ligand contact to ATP; it reads EISS. Ser-384 is an L-serine binding site.

This sequence belongs to the class-II aminoacyl-tRNA synthetase family. Type-1 seryl-tRNA synthetase subfamily. Homodimer. The tRNA molecule binds across the dimer.

Its subcellular location is the cytoplasm. It catalyses the reaction tRNA(Ser) + L-serine + ATP = L-seryl-tRNA(Ser) + AMP + diphosphate + H(+). It carries out the reaction tRNA(Sec) + L-serine + ATP = L-seryl-tRNA(Sec) + AMP + diphosphate + H(+). It functions in the pathway aminoacyl-tRNA biosynthesis; selenocysteinyl-tRNA(Sec) biosynthesis; L-seryl-tRNA(Sec) from L-serine and tRNA(Sec): step 1/1. In terms of biological role, catalyzes the attachment of serine to tRNA(Ser). Is also able to aminoacylate tRNA(Sec) with serine, to form the misacylated tRNA L-seryl-tRNA(Sec), which will be further converted into selenocysteinyl-tRNA(Sec). The sequence is that of Serine--tRNA ligase from Thermoanaerobacter pseudethanolicus (strain ATCC 33223 / 39E) (Clostridium thermohydrosulfuricum).